The following is a 159-amino-acid chain: C-type lectin BJcuL (159 aa).

The N-terminal stretch at 1–24 is a signal peptide; the sequence is MGRFLFVASSACWFVFLSLSGAKG. Cystine bridges form between cysteine 27–cysteine 38, cysteine 55–cysteine 155, cysteine 62–cysteine 157, and cysteine 130–cysteine 147. One can recognise a C-type lectin domain in the interval 34–156; it reads MNGLCYKIFN…CESKNAFLCQ (123 aa). Ca(2+) is bound by residues glutamine 120, aspartate 122, glutamate 128, asparagine 143, and aspartate 144. Residues 120–122 carry the Galactose-binding motif; the sequence is QPD.

The protein belongs to the true venom lectin family. In terms of assembly, homodecamer of disulfide-linked dimers arranged in two 5-fold symmetric pentamers. Binds the gentamicin group of aminoglycoside antibiotics at the dimeric interface near the intermolecular disulfide bond. As to expression, expressed by the venom gland.

The protein localises to the secreted. Its activity is regulated as follows. Hemagglutination activity is inhibited by lactose (MIC=2.5 mM), galactose (MIC=10 mM), and raffinose. Is very weakly or not inhibited by gentamicin, kanamycin, glucose and sucrose. In terms of biological role, galactose-binding lectin which recognizes specific carbohydrate structures and agglutinates a variety of animal cells by binding to cell-surface glycoproteins and glycolipids. Calcium-dependent lectin. Also binds lactose and raffinose. Shows high hemagglutinating activity on mammalian erythrocytes. It also involved in immunological functions, since it is able of inducing potent neutrophil activation. In vivo, it causes edema and increases vascular permeability after injection into mouse hind paws (10-100 ug/paw). In anesthetized rats, it decreases the blood pressure by approximately 15%, with a rapid return to the resting level. Is an effective inhibitor of cell growth in some cancer cell lines, especially against renal and pancreatic cancer cell lines, human breast and ovarian carcinoma, glioblastoma and a bovine brain microvascular endothelial cell line. The sequence is that of C-type lectin BJcuL from Bothrops jararacussu (Jararacussu).